The following is a 95-amino-acid chain: MREKGKLVIWPANLDKSRSRKGGRIISRKSSLEAPLLRELTAAAEKLNLNPEVEADKKYPRTWWESSGRILVDNNEAKTMVARKIAKTIKEARGG.

Belongs to the SRP19 family. Part of the signal recognition particle protein translocation system, which is composed of SRP and FtsY. Archaeal SRP consists of a 7S RNA molecule of 300 nucleotides and two protein subunits: SRP54 and SRP19.

It is found in the cytoplasm. Functionally, involved in targeting and insertion of nascent membrane proteins into the cytoplasmic membrane. Binds directly to 7S RNA and mediates binding of the 54 kDa subunit of the SRP. This chain is Signal recognition particle 19 kDa protein, found in Methanococcoides burtonii (strain DSM 6242 / NBRC 107633 / OCM 468 / ACE-M).